A 432-amino-acid polypeptide reads, in one-letter code: Phosphomethylpyrimidine synthase (432 aa).

Substrate contacts are provided by residues N66, M95, Y124, H163, 185-187, 226-229, and E265; these read SRG and DGLR. Residue H269 coordinates Zn(2+). A substrate-binding site is contributed by Y292. H333 contacts Zn(2+). The [4Fe-4S] cluster site is built by C409, C412, and C416.

It belongs to the ThiC family. The cofactor is [4Fe-4S] cluster.

It catalyses the reaction 5-amino-1-(5-phospho-beta-D-ribosyl)imidazole + S-adenosyl-L-methionine = 4-amino-2-methyl-5-(phosphooxymethyl)pyrimidine + CO + 5'-deoxyadenosine + formate + L-methionine + 3 H(+). It participates in cofactor biosynthesis; thiamine diphosphate biosynthesis. Functionally, catalyzes the synthesis of the hydroxymethylpyrimidine phosphate (HMP-P) moiety of thiamine from aminoimidazole ribotide (AIR) in a radical S-adenosyl-L-methionine (SAM)-dependent reaction. The sequence is that of Phosphomethylpyrimidine synthase from Caldanaerobacter subterraneus subsp. tengcongensis (strain DSM 15242 / JCM 11007 / NBRC 100824 / MB4) (Thermoanaerobacter tengcongensis).